The primary structure comprises 428 residues: 3-deoxy-D-manno-octulosonic acid transferase (428 aa).

The Proton acceptor role is filled by E64. Residues 274 to 275 (PR), 316 to 318 (LGE), and 342 to 345 (NLIE) each bind CMP.

Belongs to the glycosyltransferase group 1 family. Glycosyltransferase 30 subfamily.

Its subcellular location is the cell inner membrane. The enzyme catalyses lipid IVA (E. coli) + CMP-3-deoxy-beta-D-manno-octulosonate = alpha-Kdo-(2-&gt;6)-lipid IVA (E. coli) + CMP + H(+). The protein operates within bacterial outer membrane biogenesis; LPS core biosynthesis. Involved in lipopolysaccharide (LPS) biosynthesis. Catalyzes the transfer of a single 3-deoxy-D-manno-octulosonate (Kdo) residue from CMP-Kdo to lipid IV(A), the tetraacyldisaccharide-1,4'-bisphosphate precursor of lipid A. This chain is 3-deoxy-D-manno-octulosonic acid transferase (waaA), found in Bordetella pertussis.